Consider the following 103-residue polypeptide: Pyrimidine/purine nucleoside phosphorylase (103 aa).

It belongs to the nucleoside phosphorylase PpnP family.

It carries out the reaction a purine D-ribonucleoside + phosphate = a purine nucleobase + alpha-D-ribose 1-phosphate. The catalysed reaction is adenosine + phosphate = alpha-D-ribose 1-phosphate + adenine. It catalyses the reaction cytidine + phosphate = cytosine + alpha-D-ribose 1-phosphate. The enzyme catalyses guanosine + phosphate = alpha-D-ribose 1-phosphate + guanine. It carries out the reaction inosine + phosphate = alpha-D-ribose 1-phosphate + hypoxanthine. The catalysed reaction is thymidine + phosphate = 2-deoxy-alpha-D-ribose 1-phosphate + thymine. It catalyses the reaction uridine + phosphate = alpha-D-ribose 1-phosphate + uracil. The enzyme catalyses xanthosine + phosphate = alpha-D-ribose 1-phosphate + xanthine. In terms of biological role, catalyzes the phosphorolysis of diverse nucleosides, yielding D-ribose 1-phosphate and the respective free bases. Can use uridine, adenosine, guanosine, cytidine, thymidine, inosine and xanthosine as substrates. Also catalyzes the reverse reactions. This is Pyrimidine/purine nucleoside phosphorylase from Laribacter hongkongensis (strain HLHK9).